The primary structure comprises 410 residues: MRNLLENIKKNSQKLLNLTPKDKEKIILKLAQILRENFKIILEANKKDMANFTKSGAMKDRLLLDEKRILALCEGLEKIAYIEDPIGKISKGWKNYAGLSIQKMSIPLGLICVIYEARPSLSAEIAALMIKSSNACVFKGGSEAKFTNEAIFTLVNKVLKEFDLQDCFAMFTQRDEILQILAFDDLIDVIIPRGSSNMIQEIANNTKIPLIKQNKGLCHAFVDQSANLDMALKIILNAKCQRVSVCNALETLLIHEKIAKNFISLLIPEFEKFKVKIHAHENALAYFNNSNLKIFKANENTFDTEWLDFALSVKLVKDCDEAIEHINKHSSLHSETIISNDASNIAKFQRLINSSCIYANASTRFSDGGEFGFGGEVGISTSKLHARGPMGIEDICTYKYIINGEGQIRE.

Belongs to the gamma-glutamyl phosphate reductase family.

The protein resides in the cytoplasm. The enzyme catalyses L-glutamate 5-semialdehyde + phosphate + NADP(+) = L-glutamyl 5-phosphate + NADPH + H(+). Its pathway is amino-acid biosynthesis; L-proline biosynthesis; L-glutamate 5-semialdehyde from L-glutamate: step 2/2. Functionally, catalyzes the NADPH-dependent reduction of L-glutamate 5-phosphate into L-glutamate 5-semialdehyde and phosphate. The product spontaneously undergoes cyclization to form 1-pyrroline-5-carboxylate. This chain is Gamma-glutamyl phosphate reductase, found in Campylobacter jejuni subsp. jejuni serotype O:2 (strain ATCC 700819 / NCTC 11168).